The sequence spans 237 residues: Matrix protein (237 aa).

Residues 1-10 (MSSLKKILGL) show a composition bias toward low complexity. Residues 1–23 (MSSLKKILGLKGKGKKSKKLGIA) are disordered. A dynamin binding motif is present at residues 2–4 (SSL). Positions 24-27 (PPPY) match the PPXY motif motif. A PTAP/PSAP motif motif is present at residues 37-40 (PSAP).

It belongs to the vesiculoviruses matrix protein family. As to quaternary structure, homomultimer. Interacts with viral nucleocapsid; this interaction contributes to the virion assembly. Interacts with the viral envelope glycoprotein; this interaction contributes to the virion assembly. Interacts with host RAE1-NUP98 complex. Interacts with host NEDD4 and TSG101. Interacts with host dynamin. Interacts with host NDUFAF4; the interaction inhibits viral propagation and is independent of interferon activation. Interacts with host GTF2H5; the interaction may inhibit host transcription. Post-translationally, phosphorylated by host.

The protein localises to the virion. The protein resides in the host endomembrane system. Its subcellular location is the host nucleus membrane. It localises to the host nucleus. It is found in the host cytoplasm. Its function is as follows. Forms a double layer around the helical nucleocapsid, the inner matrix layer binding to the N helix and the outer matrix layer binding to the envelope glycoprotein. Plays a major role in assembly and budding of virion, by recruiting cellular partners of the ESCRT complexes that play a key role in releasing the budding particle from the host membrane. Condensates the ribonucleocapsid core during virus assembly. Inhibits the host mRNA nuclear export thereby inducing the shut off of cellular transcription and preventing the interferon signaling and the establishment of antiviral state in infected cells. This shutoff presumably inhibits interferon signaling and thus establishment of antiviral state in virus infected cells. Induces cell-rounding, cytoskeleton disorganization and apoptosis in infected cell. Inhibits host transcription, possibly through interaction with host DNA repair factor IIH/TFIIH GTF2H5 subunit. This Aedes (Bovine) protein is Matrix protein (M).